Reading from the N-terminus, the 865-residue chain is Protein translocase subunit SecA (865 aa).

ATP is bound by residues Q85, 103–107 (GEGKT), and D505. Zn(2+) is bound by residues C847, C849, C858, and H859.

The protein belongs to the SecA family. As to quaternary structure, monomer and homodimer. Part of the essential Sec protein translocation apparatus which comprises SecA, SecYEG and auxiliary proteins SecDF. Other proteins may also be involved. Zn(2+) serves as cofactor.

It localises to the cell membrane. Its subcellular location is the cytoplasm. The enzyme catalyses ATP + H2O + cellular proteinSide 1 = ADP + phosphate + cellular proteinSide 2.. In terms of biological role, part of the Sec protein translocase complex. Interacts with the SecYEG preprotein conducting channel. Has a central role in coupling the hydrolysis of ATP to the transfer of proteins into and across the cell membrane, serving as an ATP-driven molecular motor driving the stepwise translocation of polypeptide chains across the membrane. The chain is Protein translocase subunit SecA from Lactococcus lactis subsp. cremoris (strain SK11).